Reading from the N-terminus, the 302-residue chain is Syntaxin-17 (302 aa).

Residue Ser-2 is modified to N-acetylserine. Residues 2–228 (SEDEEKVKLR…KNLGKAAKYK (227 aa)) lie on the Cytoplasmic side of the membrane. Lys-41 is subject to N6-acetyllysine. A coiled-coil region spans residues 53 to 123 (EEHINAGRTV…EELKKQFNDE (71 aa)). Position 157 is a phosphotyrosine; by ABL1 (Tyr-157). In terms of domain architecture, t-SNARE coiled-coil homology spans 162–224 (IPQDQNAAES…EEGTKNLGKA (63 aa)). The helical transmembrane segment at 229–249 (LAALPVAGALIGGMVGGPIGL) threads the bilayer. The tract at residues 229-275 (LAALPVAGALIGGMVGGPIGLLAGFKVAGIAAALGGGVLGFTGGKLI) is necessary and sufficient for localization to autophagosome. The Lumenal segment spans residues 250–254 (LAGFK). A helical membrane pass occupies residues 255 to 275 (VAGIAAALGGGVLGFTGGKLI). Residues 276–302 (QRKKQKMMEKLTSSCPDLPSQTDKKCS) lie on the Cytoplasmic side of the membrane. Position 289 is a phosphoserine (Ser-289). An Endoplasmic reticulum retention signal motif is present at residues 299–302 (KKCS).

It belongs to the syntaxin family. As to quaternary structure, forms a SNARE complex composed of VAMP8, SNAP29 and STX17 involved in fusion of autophagosome with lysosome. Interacts with VAMP7 and VTI1B. Probably interacts with BET1, SCFD1 and SEC22B. Interacts with PTPN2 and ABL1; involved in STX17 phosphorylation. Interacts with COPB1. Interacts with TMED9 and TMED10; the interaction is direct. Interacts with ATG14. Interacts with RUBCNL/PACER; promoting targeting of RUBCNL/PACER to autophagosome. Interacts with VAMP8, SNAP29, VPS39 and VPS41; these interactions are increased in the absence of TMEM39A. Interacts with IRGM; promoting STX17 recruitment to autophagosomes. Interacts with ATG8 proteins GABARAP and MAP1LC3B. Interacts with RNF115; this interaction enhances STX17 stability which in turn promotes autophagosome maturation. Interacts with RAB39A (GTP-bound); the interaction promotes autophagosome-lysosome membrane fusion driven by STX17-SNAP29-VAMP8. Interacts with RAB39B; the interaction may promote a different fonction in autophagy as compared with RAB39A. In terms of assembly, (Microbial infection) The interactions with VAMP8, SNAP29 and VPS41 are decreased in presence of SARS coronavirus-2/SARS-CoV-2 ORF3A protein. Post-translationally, phosphorylated at Tyr-157 probably by ABL1. Dephosphorylation by PTPN2; regulates exit from the endoplasmic reticulum. (Microbial infection) Cleaved by the L.pneumophila serine protease Lpg1137, impairing endoplasmic reticulum-mitochondria communication, leading to inhibit autophagy.

It is found in the endoplasmic reticulum membrane. It localises to the smooth endoplasmic reticulum membrane. Its subcellular location is the endoplasmic reticulum-Golgi intermediate compartment membrane. The protein localises to the cytoplasmic vesicle. The protein resides in the autophagosome membrane. It is found in the COPII-coated vesicle membrane. It localises to the cytoplasm. Its subcellular location is the cytosol. The protein localises to the mitochondrion membrane. The protein resides in the autolysosome membrane. SNAREs, soluble N-ethylmaleimide-sensitive factor-attachment protein receptors, are essential proteins for fusion of cellular membranes. SNAREs localized on opposing membranes assemble to form a trans-SNARE complex, an extended, parallel four alpha-helical bundle that drives membrane fusion. STX17 is a SNARE of the autophagosome involved in autophagy through the direct control of autophagosome membrane fusion with the lysosome membrane. May also play a role in the early secretory pathway where it may maintain the architecture of the endoplasmic reticulum-Golgi intermediate compartment/ERGIC and Golgi and/or regulate transport between the endoplasmic reticulum, the ERGIC and the Golgi. The sequence is that of Syntaxin-17 from Homo sapiens (Human).